The chain runs to 366 residues: Chorismate synthase (366 aa).

Residues R48 and R54 each contribute to the NADP(+) site. FMN-binding positions include 125 to 127, 238 to 239, G278, 293 to 297, and R319; these read RSS, NA, and KPTSS.

Belongs to the chorismate synthase family. In terms of assembly, homotetramer. Requires FMNH2 as cofactor.

It catalyses the reaction 5-O-(1-carboxyvinyl)-3-phosphoshikimate = chorismate + phosphate. It functions in the pathway metabolic intermediate biosynthesis; chorismate biosynthesis; chorismate from D-erythrose 4-phosphate and phosphoenolpyruvate: step 7/7. Catalyzes the anti-1,4-elimination of the C-3 phosphate and the C-6 proR hydrogen from 5-enolpyruvylshikimate-3-phosphate (EPSP) to yield chorismate, which is the branch point compound that serves as the starting substrate for the three terminal pathways of aromatic amino acid biosynthesis. This reaction introduces a second double bond into the aromatic ring system. The sequence is that of Chorismate synthase from Ralstonia nicotianae (strain ATCC BAA-1114 / GMI1000) (Ralstonia solanacearum).